A 234-amino-acid polypeptide reads, in one-letter code: 2-phospho-L-lactate guanylyltransferase (234 aa).

This sequence belongs to the CofC family. In terms of assembly, homodimer.

It carries out the reaction (2S)-2-phospholactate + GTP + H(+) = (2S)-lactyl-2-diphospho-5'-guanosine + diphosphate. Its pathway is cofactor biosynthesis; coenzyme F420 biosynthesis. Its function is as follows. Guanylyltransferase that catalyzes the activation of (2S)-2-phospholactate (2-PL) as (2S)-lactyl-2-diphospho-5'-guanosine, via the condensation of 2-PL with GTP. It is involved in the biosynthesis of coenzyme F420, a hydride carrier cofactor. This is 2-phospho-L-lactate guanylyltransferase from Methanobrevibacter ruminantium (strain ATCC 35063 / DSM 1093 / JCM 13430 / OCM 146 / M1) (Methanobacterium ruminantium).